The sequence spans 711 residues: Tyrosine-protein phosphatase 2 (711 aa).

Positions 21 to 130 constitute a Rhodanese domain; the sequence is TESVSWIIDL…FASSHPDAIV (110 aa). Disordered regions lie at residues 275–306 and 329–376; these read APQQTPARPSLRSVPSYPSSNNQRRPSASRVR and IIPR…RANK. Polar residues-rich tracts occupy residues 290–306 and 340–363; these read SYPSSNNQRRPSASRVR and NAQNDGTSTMTSKLKPSVGLSNTR. The 266-residue stretch at 433-698 folds into the Tyrosine-protein phosphatase domain; it reads EMTRSLAFND…KFLYDVVDYL (266 aa). Cysteine 630 (phosphocysteine intermediate) is an active-site residue.

The protein belongs to the protein-tyrosine phosphatase family. Non-receptor class subfamily.

It localises to the cytoplasm. It catalyses the reaction O-phospho-L-tyrosyl-[protein] + H2O = L-tyrosyl-[protein] + phosphate. Its function is as follows. Plays a role in inhibiting the onset of mitosis. Dephosphorylates sty1/spc1 and wis1/spc2/sty2. The polypeptide is Tyrosine-protein phosphatase 2 (pyp2) (Schizosaccharomyces pombe (strain 972 / ATCC 24843) (Fission yeast)).